The chain runs to 156 residues: Large ribosomal subunit protein uL22 (156 aa).

It belongs to the universal ribosomal protein uL22 family. As to quaternary structure, part of the 50S ribosomal subunit.

Its function is as follows. This protein binds specifically to 23S rRNA. It makes multiple contacts with different domains of the 23S rRNA in the assembled 50S subunit and ribosome. The globular domain of the protein is located near the polypeptide exit tunnel on the outside of the subunit, while an extended beta-hairpin is found that lines the wall of the exit tunnel in the center of the 70S ribosome. The sequence is that of Large ribosomal subunit protein uL22 from Aeropyrum pernix (strain ATCC 700893 / DSM 11879 / JCM 9820 / NBRC 100138 / K1).